The sequence spans 284 residues: Pseudouridine-5'-phosphate glycosidase (284 aa).

The active-site Proton donor is E8. Residues K69 and V89 each contribute to the substrate site. D119 serves as a coordination point for Mn(2+). Position 121-123 (S121–D123) interacts with substrate. K140 acts as the Nucleophile in catalysis.

This sequence belongs to the pseudouridine-5'-phosphate glycosidase family. In terms of assembly, homotrimer. Mn(2+) serves as cofactor.

The catalysed reaction is D-ribose 5-phosphate + uracil = psi-UMP + H2O. Catalyzes the reversible cleavage of pseudouridine 5'-phosphate (PsiMP) to ribose 5-phosphate and uracil. Functions biologically in the cleavage direction, as part of a pseudouridine degradation pathway. The sequence is that of Pseudouridine-5'-phosphate glycosidase from Pseudothermotoga lettingae (strain ATCC BAA-301 / DSM 14385 / NBRC 107922 / TMO) (Thermotoga lettingae).